We begin with the raw amino-acid sequence, 460 residues long: Argininosuccinate lyase (460 aa).

It belongs to the lyase 1 family. Argininosuccinate lyase subfamily.

Its subcellular location is the cytoplasm. The catalysed reaction is 2-(N(omega)-L-arginino)succinate = fumarate + L-arginine. It participates in amino-acid biosynthesis; L-arginine biosynthesis; L-arginine from L-ornithine and carbamoyl phosphate: step 3/3. The sequence is that of Argininosuccinate lyase from Buchnera aphidicola subsp. Cinara cedri (strain Cc).